Reading from the N-terminus, the 209-residue chain is Molybdenum cofactor guanylyltransferase (209 aa).

GTP is bound by residues 16–18 (LAG), K28, N56, D69, and D103. A Mg(2+)-binding site is contributed by D103.

Belongs to the MobA family. In terms of assembly, monomer. Mg(2+) is required as a cofactor.

Its subcellular location is the cytoplasm. The catalysed reaction is Mo-molybdopterin + GTP + H(+) = Mo-molybdopterin guanine dinucleotide + diphosphate. In terms of biological role, transfers a GMP moiety from GTP to Mo-molybdopterin (Mo-MPT) cofactor (Moco or molybdenum cofactor) to form Mo-molybdopterin guanine dinucleotide (Mo-MGD) cofactor. The chain is Molybdenum cofactor guanylyltransferase from Rhizobium leguminosarum bv. trifolii (strain WSM2304).